We begin with the raw amino-acid sequence, 103 residues long: Pyrimidine/purine nucleoside phosphorylase (103 aa).

The protein belongs to the nucleoside phosphorylase PpnP family.

The enzyme catalyses a purine D-ribonucleoside + phosphate = a purine nucleobase + alpha-D-ribose 1-phosphate. It catalyses the reaction adenosine + phosphate = alpha-D-ribose 1-phosphate + adenine. The catalysed reaction is cytidine + phosphate = cytosine + alpha-D-ribose 1-phosphate. It carries out the reaction guanosine + phosphate = alpha-D-ribose 1-phosphate + guanine. The enzyme catalyses inosine + phosphate = alpha-D-ribose 1-phosphate + hypoxanthine. It catalyses the reaction thymidine + phosphate = 2-deoxy-alpha-D-ribose 1-phosphate + thymine. The catalysed reaction is uridine + phosphate = alpha-D-ribose 1-phosphate + uracil. It carries out the reaction xanthosine + phosphate = alpha-D-ribose 1-phosphate + xanthine. Functionally, catalyzes the phosphorolysis of diverse nucleosides, yielding D-ribose 1-phosphate and the respective free bases. Can use uridine, adenosine, guanosine, cytidine, thymidine, inosine and xanthosine as substrates. Also catalyzes the reverse reactions. The protein is Pyrimidine/purine nucleoside phosphorylase of Shewanella sp. (strain ANA-3).